The primary structure comprises 86 residues: Large ribosomal subunit protein bL27 (86 aa).

The segment at 1-26 (MATKKAGGSSRNGRDSAGRRLGVKQS) is disordered.

Belongs to the bacterial ribosomal protein bL27 family.

This is Large ribosomal subunit protein bL27 from Rickettsia canadensis (strain McKiel).